The primary structure comprises 407 residues: Nuclear hormone receptor family member nhr-134 (407 aa).

An NR C4-type zinc finger spans residues 11–31 (CEICGQKTSGRHFGVMSCRSC). The NR C4-type; degenerate zinc finger occupies 47–66 (RCPNGNCKLLENGKFKCKKC). The 251-residue stretch at 157-407 (QFHNSLERLA…FSEPDMFEST (251 aa)) folds into the NR LBD domain.

It belongs to the nuclear hormone receptor family.

The protein resides in the nucleus. In terms of biological role, orphan nuclear receptor. The chain is Nuclear hormone receptor family member nhr-134 (nhr-134) from Caenorhabditis elegans.